A 126-amino-acid chain; its full sequence is Aspartate 1-decarboxylase (126 aa).

Serine 25 acts as the Schiff-base intermediate with substrate; via pyruvic acid in catalysis. At serine 25 the chain carries Pyruvic acid (Ser). Threonine 57 provides a ligand contact to substrate. Tyrosine 58 serves as the catalytic Proton donor. Substrate is bound at residue 73-75 (GAA).

It belongs to the PanD family. Heterooctamer of four alpha and four beta subunits. The cofactor is pyruvate. In terms of processing, is synthesized initially as an inactive proenzyme, which is activated by self-cleavage at a specific serine bond to produce a beta-subunit with a hydroxyl group at its C-terminus and an alpha-subunit with a pyruvoyl group at its N-terminus.

It localises to the cytoplasm. The catalysed reaction is L-aspartate + H(+) = beta-alanine + CO2. It participates in cofactor biosynthesis; (R)-pantothenate biosynthesis; beta-alanine from L-aspartate: step 1/1. Catalyzes the pyruvoyl-dependent decarboxylation of aspartate to produce beta-alanine. This is Aspartate 1-decarboxylase from Pectobacterium carotovorum subsp. carotovorum (strain PC1).